Here is a 61-residue protein sequence, read N- to C-terminus: MAVPKKKTSRARRDRRRSHHALRGPGMVACPNCGEMRLPHRVCPECGYYKGRTVVAVEAVE.

Over residues Met1–Leu22 the composition is skewed to basic residues. Positions Met1–Gly24 are disordered.

The protein belongs to the bacterial ribosomal protein bL32 family.

The sequence is that of Large ribosomal subunit protein bL32 from Rubrobacter xylanophilus (strain DSM 9941 / JCM 11954 / NBRC 16129 / PRD-1).